The chain runs to 283 residues: Aspartate dehydrogenase domain-containing protein (283 aa).

A phosphoserine mark is found at Ser20 and Ser168.

This sequence belongs to the L-aspartate dehydrogenase family.

In Homo sapiens (Human), this protein is Aspartate dehydrogenase domain-containing protein.